Reading from the N-terminus, the 500-residue chain is Lysine--tRNA ligase (500 aa).

Residues glutamate 409 and glutamate 416 each coordinate Mg(2+).

It belongs to the class-II aminoacyl-tRNA synthetase family. As to quaternary structure, homodimer. Requires Mg(2+) as cofactor.

It localises to the cytoplasm. The catalysed reaction is tRNA(Lys) + L-lysine + ATP = L-lysyl-tRNA(Lys) + AMP + diphosphate. This Lysinibacillus sphaericus (strain C3-41) protein is Lysine--tRNA ligase.